Consider the following 430-residue polypeptide: Aspartate aminotransferase, mitochondrial (430 aa).

The N-terminal 29 residues, 1–29 (MALLHSARVLSGVASAFHPGLAAAASARA), are a transit peptide targeting the mitochondrion. T48 carries the phosphothreonine modification. At K59 the chain carries N6-acetyllysine. G65 contacts substrate. Position 73 is an N6-acetyllysine; alternate (K73). Position 73 is an N6-succinyllysine; alternate (K73). Residue K82 is modified to N6-acetyllysine. Position 90 is an N6-acetyllysine; alternate (K90). At K90 the chain carries N6-succinyllysine; alternate. Y96 is modified (3'-nitrotyrosine; alternate). Y96 is subject to Phosphotyrosine; alternate. K122 carries the N6-acetyllysine; alternate modification. At K122 the chain carries N6-succinyllysine; alternate. At S143 the chain carries Phosphoserine. An N6-acetyllysine; alternate modification is found at K159. Residue K159 is modified to N6-succinyllysine; alternate. W162 provides a ligand contact to substrate. K185 is subject to N6-acetyllysine; alternate. At K185 the chain carries N6-succinyllysine; alternate. Position 215 (N215) interacts with substrate. Position 227 is an N6-succinyllysine (K227). N6-acetyllysine is present on K234. N6-acetyllysine; alternate is present on residues K279 and K296. K279 carries the N6-(pyridoxal phosphate)lysine; alternate modification. An N6-succinyllysine; alternate modification is found at K296. K302 is modified (N6-acetyllysine). An N6-acetyllysine; alternate modification is found at K309. The residue at position 309 (K309) is an N6-succinyllysine; alternate. Asymmetric dimethylarginine is present on R313. The residue at position 338 (K338) is an N6-acetyllysine; alternate. K338 is subject to N6-succinyllysine; alternate. Residue K345 is modified to N6-acetyllysine. At K363 the chain carries N6-acetyllysine; alternate. At K363 the chain carries N6-succinyllysine; alternate. N6-acetyllysine occurs at positions 364 and 387. N6-acetyllysine; alternate occurs at positions 396 and 404. N6-succinyllysine; alternate is present on residues K396 and K404. R407 provides a ligand contact to substrate.

Belongs to the class-I pyridoxal-phosphate-dependent aminotransferase family. As to quaternary structure, homodimer. It depends on pyridoxal 5'-phosphate as a cofactor.

Its subcellular location is the mitochondrion matrix. The protein localises to the cell membrane. It carries out the reaction L-aspartate + 2-oxoglutarate = oxaloacetate + L-glutamate. It catalyses the reaction L-kynurenine + 2-oxoglutarate = kynurenate + L-glutamate + H2O. Functionally, catalyzes the irreversible transamination of the L-tryptophan metabolite L-kynurenine to form kynurenic acid (KA). As a member of the malate-aspartate shuttle, it has a key role in the intracellular NAD(H) redox balance. Is important for metabolite exchange between mitochondria and cytosol, and for amino acid metabolism. Facilitates cellular uptake of long-chain free fatty acids. This Oryctolagus cuniculus (Rabbit) protein is Aspartate aminotransferase, mitochondrial (GOT2).